Here is a 217-residue protein sequence, read N- to C-terminus: Probable cutinase 3 (217 aa).

An N-terminal signal peptide occupies residues 1–17 (MSLRSLFVAGLATLALA). Disulfide bonds link C39-C118 and C65-C79. S129 (nucleophile) is an active-site residue. C180 and C187 are joined by a disulfide. The active site involves D184. Catalysis depends on H197, which acts as the Proton donor/acceptor.

Belongs to the cutinase family.

Its subcellular location is the secreted. The catalysed reaction is cutin + H2O = cutin monomers.. Catalyzes the hydrolysis of complex carboxylic polyesters found in the cell wall of plants. Degrades cutin, a macromolecule that forms the structure of the plant cuticle. This Aspergillus fumigatus (strain CBS 144.89 / FGSC A1163 / CEA10) (Neosartorya fumigata) protein is Probable cutinase 3.